The sequence spans 257 residues: Phosphate import ATP-binding protein PstB (257 aa).

One can recognise an ABC transporter domain in the interval 11–252 (FNISRLYLYI…PKNELTEKYV (242 aa)). An ATP-binding site is contributed by 43-50 (GPSGSGKS).

It belongs to the ABC transporter superfamily. Phosphate importer (TC 3.A.1.7) family. In terms of assembly, the complex is composed of two ATP-binding proteins (PstB), two transmembrane proteins (PstC and PstA) and a solute-binding protein (PstS).

The protein resides in the cell membrane. It carries out the reaction phosphate(out) + ATP + H2O = ADP + 2 phosphate(in) + H(+). In terms of biological role, part of the ABC transporter complex PstSACB involved in phosphate import. Responsible for energy coupling to the transport system. This is Phosphate import ATP-binding protein PstB from Saccharolobus solfataricus (strain ATCC 35092 / DSM 1617 / JCM 11322 / P2) (Sulfolobus solfataricus).